A 252-amino-acid chain; its full sequence is Large ribosomal subunit protein uL29m (252 aa).

Position 146 is an N6-acetyllysine (K146). Residues 230–240 (KKKEKILHAKF) are compositionally biased toward basic residues. Residues 230 to 252 (KKKEKILHAKFPHLSQERKSSSV) are disordered.

Belongs to the universal ribosomal protein uL29 family. In terms of assembly, component of the mitochondrial ribosome large subunit (39S) which comprises a 16S rRNA and about 50 distinct proteins.

The protein resides in the mitochondrion. The polypeptide is Large ribosomal subunit protein uL29m (Mrpl47) (Mus musculus (Mouse)).